We begin with the raw amino-acid sequence, 194 residues long: Ion-translocating oxidoreductase complex subunit A (194 aa).

6 helical membrane passes run 4–24, 39–59, 72–92, 102–122, 135–155, and 172–192; these read LALI…QFLG, IGLS…SHIL, LRTI…EMLV, VLGI…VALL, TTQG…FAAL, and AIGM…SGLV.

The protein belongs to the NqrDE/RnfAE family. The complex is composed of six subunits: RnfA, RnfB, RnfC, RnfD, RnfE and RnfG.

The protein resides in the cell inner membrane. Part of a membrane-bound complex that couples electron transfer with translocation of ions across the membrane. This is Ion-translocating oxidoreductase complex subunit A from Pseudomonas aeruginosa (strain LESB58).